The sequence spans 251 residues: Flap endonuclease Xni (251 aa).

Residue Asp-104 participates in Mg(2+) binding. Positions 160–249 (VLPRQLPDYW…IDGNLQQLRL (90 aa)) constitute a 5'-3' exonuclease domain. 5 residues coordinate K(+): Leu-171, Ala-172, Pro-180, Val-182, and Ile-185. The tract at residues 184-189 (GIGPKS) is interaction with DNA.

The protein belongs to the Xni family. Mg(2+) is required as a cofactor. The cofactor is K(+).

Its function is as follows. Has flap endonuclease activity. During DNA replication, flap endonucleases cleave the 5'-overhanging flap structure that is generated by displacement synthesis when DNA polymerase encounters the 5'-end of a downstream Okazaki fragment. The polypeptide is Flap endonuclease Xni (Salmonella paratyphi A (strain ATCC 9150 / SARB42)).